Consider the following 451-residue polypeptide: Plasmepsin III (451 aa).

Over 1 to 37 (MNLTIKEEDFTNTFMKNEESFNTFRVTKVKRWNAKRL) the chain is Cytoplasmic. Residues 1–123 (MNLTIKEEDF…KGLTKKSYLG (123 aa)) constitute a propeptide that is removed on maturation. Residues 38–58 (FKILFVTVFIVLAGGFSYYIF) traverse the membrane as a helical; Signal-anchor for type II membrane protein segment. Topologically, residues 59–451 (ENFVFQKNRK…TVGFALAKNL (393 aa)) are lumenal. The region spanning 139–446 (SFGEAKLGDN…DYDNHTVGFA (308 aa)) is the Peptidase A1 domain. 2 disulfide bridges follow: Cys-170-Cys-175 and Cys-372-Cys-408.

It belongs to the peptidase A1 family. As to quaternary structure, probable homodimer; in the zymogen form. Monomer; in the active form. Acidification disrupts homodimerization. Component of the hemozoin formation complex (HFC) composed of falcipains FP2A and/or FP2B, plasmepsins PMII, PMIII/HAP and PMIV, heme detoxifying protein HDP and falcilysin FLN. The HFC complex is involved in hemoglobin degradation and detoxification of heme in the food vacuole during the asexual blood stage. Proteolytically cleaved into the soluble active mature form by cysteine proteases in the digestive vacuole of trophozoites. Proteolysis requires an acidic environment. Transprocessing may serve as an alternate activation system.

It is found in the membrane. The protein localises to the vacuole lumen. It carries out the reaction Hydrolysis of the bonds linking certain hydrophobic residues in hemoglobin or globin. Also cleaves small molecules substrates such as Ala-Leu-Glu-Arg-Thr-Phe-|-Phe(NO2)-Ser-Phe-Pro-Thr.. Dimerization causes loss of catalytic activity. Inhibited by pepstatin A. Inhibited by Zn(2+). Functionally, during the asexual blood stage, catalyzes the cleavage of denatured host hemoglobin (Hb) or globins. Digestion of host Hb is an essential step which provides the parasite with amino acids for protein synthesis, and regulates osmolarity. This chain is Plasmepsin III, found in Plasmodium falciparum (isolate 3D7).